Reading from the N-terminus, the 388-residue chain is uncharacterized protein (388 aa).

Helical transmembrane passes span 18–38 (AAMFLNYLTIGIPLVMLPLYV), 42–62 (LHLSDLLIGIAVGSQFIATLL), 89–111 (ASGLLMLVSLIAHPVPLLAWAIL), 116–136 (VLLGIGESFILTGNLTWGMWL), 145–165 (VISWNGMATYGALAIGAPLGL), 171–191 (AGLALPALLVVLLPIIASGVI), 219–239 (TGLVLQGIGFATLSAFTALWF), 248–268 (GFAMTLFGIAFIAVRFFCAKF), 287–307 (TGLAVMWAAPSAGAALIGAAI), 341–361 (AFQDLAYGFTGPIAGLLTPFI), and 365–385 (QVFLLAAACALLGAAVVHLLL).

This sequence belongs to the major facilitator superfamily. YfcJ family.

The protein localises to the cell inner membrane. This is an uncharacterized protein from Salmonella typhimurium (strain LT2 / SGSC1412 / ATCC 700720).